The primary structure comprises 699 residues: Elongation factor G (699 aa).

The region spanning 8 to 283 (EHIRNIGICA…AVVDFLPSPI (276 aa)) is the tr-type G domain. GTP is bound by residues 17-24 (AHIDAGKT), 81-85 (DTPGH), and 135-138 (NKMD).

The protein belongs to the TRAFAC class translation factor GTPase superfamily. Classic translation factor GTPase family. EF-G/EF-2 subfamily.

Its subcellular location is the cytoplasm. Catalyzes the GTP-dependent ribosomal translocation step during translation elongation. During this step, the ribosome changes from the pre-translocational (PRE) to the post-translocational (POST) state as the newly formed A-site-bound peptidyl-tRNA and P-site-bound deacylated tRNA move to the P and E sites, respectively. Catalyzes the coordinated movement of the two tRNA molecules, the mRNA and conformational changes in the ribosome. This chain is Elongation factor G, found in Rickettsia rickettsii.